Reading from the N-terminus, the 911-residue chain is Protein translocase subunit SecA (911 aa).

ATP-binding positions include Gln-87, 105-109 (GEGKT), and Asp-510. Residues Cys-896, Cys-898, Cys-907, and His-908 each contribute to the Zn(2+) site.

It belongs to the SecA family. Monomer and homodimer. Part of the essential Sec protein translocation apparatus which comprises SecA, SecYEG and auxiliary proteins SecDF-YajC and YidC. It depends on Zn(2+) as a cofactor.

Its subcellular location is the cell inner membrane. It is found in the cytoplasm. The enzyme catalyses ATP + H2O + cellular proteinSide 1 = ADP + phosphate + cellular proteinSide 2.. Its function is as follows. Part of the Sec protein translocase complex. Interacts with the SecYEG preprotein conducting channel. Has a central role in coupling the hydrolysis of ATP to the transfer of proteins into and across the cell membrane, serving both as a receptor for the preprotein-SecB complex and as an ATP-driven molecular motor driving the stepwise translocation of polypeptide chains across the membrane. This chain is Protein translocase subunit SecA, found in Acinetobacter baumannii (strain SDF).